Reading from the N-terminus, the 344-residue chain is Oxygen sensor histidine kinase NreB (344 aa).

[4Fe-4S] cluster is bound by residues C58, C61, C73, and C76. Residues 152–344 (RISRELHDSV…GTNVTLNIPI (193 aa)) form the Histidine kinase domain. A Phosphohistidine; by autocatalysis modification is found at H158.

[4Fe-4S] cluster serves as cofactor. Post-translationally, autophosphorylated.

The protein localises to the cytoplasm. It catalyses the reaction ATP + protein L-histidine = ADP + protein N-phospho-L-histidine.. Its function is as follows. Member of the two-component regulatory system NreB/NreC involved in the control of dissimilatory nitrate/nitrite reduction in response to oxygen. NreB functions as a direct oxygen sensor histidine kinase which is autophosphorylated, in the absence of oxygen, probably at the conserved histidine residue, and transfers its phosphate group probably to a conserved aspartate residue of NreC. NreB/NreC activates the expression of the nitrate (narGHJI) and nitrite (nir) reductase operons, as well as the putative nitrate transporter gene narT. This is Oxygen sensor histidine kinase NreB (nreB) from Staphylococcus aureus (strain JH1).